A 138-amino-acid chain; its full sequence is MTGSKKTPSTSPSKKLSSPPEVKLRHRFAKRQIRRRRIDLACGCSIYIHINCVNNGFTHRGTHHCSSSSEWRFYLGASKSPIFQNTASGDANVHTQPGISHSSQSKPQHEDSVGSPQSLLQLPSLDDVDDDFWADLLK.

A compositionally biased stretch (low complexity) spans 1 to 20; it reads MTGSKKTPSTSPSKKLSSPP. A disordered region spans residues 1-23; sequence MTGSKKTPSTSPSKKLSSPPEVK. Positions 23–37 match the Nuclear localization signal motif; that stretch reads KLRHRFAKRQIRRRR. The segment at 42 to 59 is a zinc-finger region; the sequence is CGCSIYIHINCVNNGFTH. Over residues 85-106 the composition is skewed to polar residues; the sequence is NTASGDANVHTQPGISHSSQSK. The tract at residues 85–123 is disordered; the sequence is NTASGDANVHTQPGISHSSQSKPQHEDSVGSPQSLLQLP. The span at 113-123 shows a compositional bias: low complexity; the sequence is VGSPQSLLQLP. The transactivation stretch occupies residues 124–138; that stretch reads SLDDVDDDFWADLLK.

It belongs to the geminiviridae transcriptional activator protein family. Monomer. Homodimer. Homooligomer. Self-interaction correlates with nuclear localization and efficient activation of transcription. Monomers suppress local silencing by interacting with and inactivating host adenosine kinase 2 (ADK2) in the cytoplasm. Interacts with and inhibits host SNF1 kinase. Binds to ssDNA. In terms of processing, phosphorylated.

The protein resides in the host nucleus. Its subcellular location is the host cytoplasm. Strong activator of the late viral genes promoters. Enhances the expression of the capsid protein and nuclear shuttle protein. Acts as a suppressor of RNA-mediated gene silencing, also known as post-transcriptional gene silencing (PTGS), a mechanism of plant viral defense that limits the accumulation of viral RNAs. Suppresses the host RNA silencing by inhibiting adenosine kinase 2 (ADK2), a kinase involved in a general methylation pathway. Also suppresses the host basal defense by interacting with and inhibiting SNF1 kinase, a key regulator of cell metabolism implicated in innate antiviral defense. Determines pathogenicity. The polypeptide is Transcriptional activator protein (Pepper huasteco yellow vein virus (PHYVV)).